Reading from the N-terminus, the 1095-residue chain is 1-phosphatidylinositol 4,5-bisphosphate phosphodiesterase (1095 aa).

In terms of domain architecture, PI-PLC X-box spans M319–K469. Catalysis depends on residues H334 and H381. Residues K467 and K469 each contribute to the substrate site. The disordered stretch occupies residues E487–G529. The segment covering A500–A523 has biased composition (low complexity). Residues L550–R666 form the PI-PLC Y-box domain. Substrate contacts are provided by S579 and R606. The region spanning R666–M794 is the C2 domain. Disordered stretches follow at residues I842–E863 and Q1000–K1030. Basic and acidic residues-rich tracts occupy residues D852–E863 and T1007–K1030.

In terms of assembly, interacts with inaD. Abundantly expressed in the adult retina.

The enzyme catalyses a 1,2-diacyl-sn-glycero-3-phospho-(1D-myo-inositol-4,5-bisphosphate) + H2O = 1D-myo-inositol 1,4,5-trisphosphate + a 1,2-diacyl-sn-glycerol + H(+). In terms of biological role, the production of the second messenger molecules diacylglycerol (DAG) and inositol 1,4,5-trisphosphate (IP3) is mediated by activated phosphatidylinositol-specific phospholipase C enzymes. Essential component of the phototransduction pathway. Essential downstream component of a hh-signaling pathway which regulates the Duox-dependent gut immune response to bacterial uracil; required for the activation of Cad99C and consequently Cad99C-dependent endosome formation, which is essential for the Duox-dependent production of reactive oxygen species (ROS) in response to intestinal bacterial infection. This chain is 1-phosphatidylinositol 4,5-bisphosphate phosphodiesterase, found in Drosophila melanogaster (Fruit fly).